The sequence spans 269 residues: ATP synthase subunit gamma, mitochondrial (269 aa).

In terms of assembly, F-type ATP synthases have 2 components, the catalytic core F(1) and the membrane-embedded component F(0), linked together by a central stalk and a peripheral stalk. The central stalk, also called rotor shaft, is often seen as part of F(1). The peripheral stalk is seen as part of F(0). F(0) contains the membrane channel next to the rotor. F-type ATP synthases form dimers but each monomer functions independently in ATP generation. The dimer consists of 18 different polypeptides: ATP1 (subunit alpha, part of F(1), 3 molecules per monomer), ATP2 (subunit beta, part of F(1), 3 molecules per monomer), ATP3 (subunit gamma, part of the central stalk), ATP4 (subunit b, part of the peripheral stalk), ATP5/OSCP (subunit 5/OSCP, part of the peripheral stalk), ATP6 (subunit a, part of the peripheral stalk), ATP7 (subunit d, part of the peripheral stalk), ATP8 (subunit 8, part of the peripheral stalk), OLI1 (subunit c, part of the rotor, 10 molecules per monomer), ATP14 (subunit h, part of the peripheral stalk), ATP15 (subunit epsilon, part of the central stalk), ATP16 (subunit delta, part of the central stalk), ATP17 (subunit f, part of the peripheral stalk), ATP18 (subunit i/j, part of the peripheral stalk). Dimer-specific subunits are ATP19 (subunit k, at interface between monomers), ATP20 (subunit g, at interface between monomers), TIM11 (subunit e, at interface between monomers). Also contains subunit L.

It is found in the mitochondrion inner membrane. In terms of biological role, mitochondrial membrane ATP synthase (F(1)F(0) ATP synthase or Complex V) produces ATP from ADP in the presence of a proton gradient across the membrane which is generated by electron transport complexes of the respiratory chain. F-type ATP synthases consist of two structural domains, F(1) - containing the extramembraneous catalytic core, and F(0) - containing the membrane proton channel, linked together by a central stalk and a peripheral stalk. During catalysis, ATP synthesis in the catalytic domain of F(1) is coupled via a rotary mechanism of the central stalk subunits to proton translocation. Part of the complex F(1) domain and the central stalk which is part of the complex rotary element. The gamma/ATP3 subunit protrudes into the catalytic domain formed of alpha/ATP1(3)beta/ATP2(3). Rotation of the central stalk against the surrounding alpha/ATP1(3)beta/ATP2(3) subunits leads to hydrolysis of ATP in three separate catalytic sites on the beta/ATP2 subunits. The protein is ATP synthase subunit gamma, mitochondrial of Pichia angusta (Yeast).